The sequence spans 100 residues: Aspartyl/glutamyl-tRNA(Asn/Gln) amidotransferase subunit C (100 aa).

The protein belongs to the GatC family. In terms of assembly, heterotrimer of A, B and C subunits.

The catalysed reaction is L-glutamyl-tRNA(Gln) + L-glutamine + ATP + H2O = L-glutaminyl-tRNA(Gln) + L-glutamate + ADP + phosphate + H(+). The enzyme catalyses L-aspartyl-tRNA(Asn) + L-glutamine + ATP + H2O = L-asparaginyl-tRNA(Asn) + L-glutamate + ADP + phosphate + 2 H(+). Functionally, allows the formation of correctly charged Asn-tRNA(Asn) or Gln-tRNA(Gln) through the transamidation of misacylated Asp-tRNA(Asn) or Glu-tRNA(Gln) in organisms which lack either or both of asparaginyl-tRNA or glutaminyl-tRNA synthetases. The reaction takes place in the presence of glutamine and ATP through an activated phospho-Asp-tRNA(Asn) or phospho-Glu-tRNA(Gln). This is Aspartyl/glutamyl-tRNA(Asn/Gln) amidotransferase subunit C from Petrotoga mobilis (strain DSM 10674 / SJ95).